Reading from the N-terminus, the 106-residue chain is Large ribosomal subunit protein uL24 (106 aa).

It belongs to the universal ribosomal protein uL24 family. Part of the 50S ribosomal subunit.

In terms of biological role, one of two assembly initiator proteins, it binds directly to the 5'-end of the 23S rRNA, where it nucleates assembly of the 50S subunit. Functionally, one of the proteins that surrounds the polypeptide exit tunnel on the outside of the subunit. In Polaromonas sp. (strain JS666 / ATCC BAA-500), this protein is Large ribosomal subunit protein uL24.